A 607-amino-acid polypeptide reads, in one-letter code: WD repeat-containing protein 1-B (607 aa).

WD repeat units lie at residues E4–I45, P48–T87, L93–T135, S138–G176, K180–G218, V224–V263, T270–K306, K311–A351, T358–V408, L432–I474, K480–V518, S523–L561, and T566–V604.

Belongs to the WD repeat AIP1 family.

Its subcellular location is the cell membrane. It localises to the cytoplasm. The protein resides in the cytoskeleton. It is found in the nucleus. Its function is as follows. Induces disassembly of actin filaments in conjunction with ADF/cofilin family proteins. Doesn't sever actin filaments alone, but caps the barbed ends of filaments severed by cofilin, which blocks annealing and depolymerization and allows more extensive severing by cofilin. In Xenopus laevis (African clawed frog), this protein is WD repeat-containing protein 1-B (wdr1-b).